Here is a 591-residue protein sequence, read N- to C-terminus: L-fucose isomerase (591 aa).

Residues glutamate 337 and aspartate 361 each act as proton acceptor in the active site. Residues glutamate 337, aspartate 361, and histidine 528 each contribute to the Mn(2+) site.

It belongs to the L-fucose isomerase family. In terms of assembly, homohexamer. Requires Mn(2+) as cofactor.

It localises to the cytoplasm. The enzyme catalyses L-fucose = L-fuculose. It functions in the pathway carbohydrate degradation; L-fucose degradation; L-lactaldehyde and glycerone phosphate from L-fucose: step 1/3. In terms of biological role, converts the aldose L-fucose into the corresponding ketose L-fuculose. The polypeptide is L-fucose isomerase (Salmonella arizonae (strain ATCC BAA-731 / CDC346-86 / RSK2980)).